The chain runs to 241 residues: 2-C-methyl-D-erythritol 4-phosphate cytidylyltransferase (241 aa).

The protein belongs to the IspD/TarI cytidylyltransferase family. IspD subfamily.

It carries out the reaction 2-C-methyl-D-erythritol 4-phosphate + CTP + H(+) = 4-CDP-2-C-methyl-D-erythritol + diphosphate. The protein operates within isoprenoid biosynthesis; isopentenyl diphosphate biosynthesis via DXP pathway; isopentenyl diphosphate from 1-deoxy-D-xylulose 5-phosphate: step 2/6. In terms of biological role, catalyzes the formation of 4-diphosphocytidyl-2-C-methyl-D-erythritol from CTP and 2-C-methyl-D-erythritol 4-phosphate (MEP). In Baumannia cicadellinicola subsp. Homalodisca coagulata, this protein is 2-C-methyl-D-erythritol 4-phosphate cytidylyltransferase.